A 384-amino-acid polypeptide reads, in one-letter code: Early estrogen-induced gene 1 protein (384 aa).

Residues 2-145 (AFLMKKKKFK…ILKVTIGMFL (144 aa)) form the C2 NT-type domain. Positions 129 to 138 (NTRQDNSILK) are required for interaction with TNFRSF11A/RANK. The segment at 173 to 315 (LTCKGGGTSS…RRKKDSVESH (143 aa)) is disordered. Positions 183-193 (GGSSTNSLTGS) are enriched in low complexity. The span at 227 to 254 (SRNSSYASQQSKISGYSTEHSRSSSLSD) shows a compositional bias: polar residues. Composition is skewed to basic and acidic residues over residues 280–292 (GSER…EKPP) and 299–315 (HLSD…VESH).

It belongs to the EEIG family. As to quaternary structure, part of a complex composed of EEIG1, TNFRSF11A/RANK, PLCG2, GAB2, TEC and BTK; complex formation increases in the presence of TNFSF11/RANKL. Interacts with PRDM1/BLIMP1; following TNFSF11/RANKL stimulation in bone marrow-derived macrophages, the interaction promotes the binding of PRDM1/BLIMP1 to the gene promoter of IRF8.

It is found in the nucleus. Its subcellular location is the cytoplasm. The protein localises to the membrane raft. Its function is as follows. Key component of TNFSF11/RANKL- and TNF-induced osteoclastogenesis pathways, thereby mediates bone resorption in pathological bone loss conditions. Required for TNFSF11/RANKL-induced osteoclastogenesis via its interaction with TNFRSF11A/RANK, thereby facilitates the downsteam transcription of NFATC1 and activation of PLCG2. Facilitates recruitment of the transcriptional repressor PRDM1/BLIMP1 to the promoter of the anti-osteoclastogenesis gene IRF8, thereby resulting in transcription of osteoclast differentiation factors. May play a role in estrogen action. The polypeptide is Early estrogen-induced gene 1 protein (Homo sapiens (Human)).